The sequence spans 234 residues: Melanoregulin (234 aa).

Residues 215–234 (MNQNISGGEDEDEDESEPDD) form a disordered region. The segment covering 222-234 (GEDEDEDESEPDD) has biased composition (acidic residues).

The protein belongs to the melanoregulin family.

It localises to the apical cell membrane. The protein localises to the melanosome membrane. The protein resides in the lysosome membrane. Its subcellular location is the cytoplasmic vesicle membrane. In terms of biological role, probably functions as a cargo-recognition protein that couples cytoplasmic vesicles to the transport machinery. Contributes to retrograde melanosome transport from the cell periphery to the center. Overexpression causes accumulation of late endosomes and/or lysosomes at the microtubule organising center (MTOC) at the center of the cell. Probably binds cholesterol and requires the presence of cholesterol in membranes to function in microtubule-mediated retrograde organelle transport. Binds phosphatidylinositol 3-phosphate, phosphatidylinositol 4-phosphate, phosphatidylinositol 5-phosphate and phosphatidylinositol 3,5-bisphosphate. The protein is Melanoregulin (mreg) of Danio rerio (Zebrafish).